Reading from the N-terminus, the 1511-residue chain is Pleiotropic ABC efflux transporter of multiple drugs (1511 aa).

Residues 1-14 (MPEAKLNNNVNDVT) are compositionally biased toward polar residues. The disordered stretch occupies residues 1–32 (MPEAKLNNNVNDVTSYSSASSSTENAADLHNY). Over 1 to 517 (MPEAKLNNNV…LLIRNMWRLR (517 aa)) the chain is Cytoplasmic. Serine 22 carries the post-translational modification Phosphoserine. Residues threonine 49 and threonine 51 each carry the phosphothreonine modification. A disordered region spans residues 52 to 71 (AQSMQNSTQSAPNKSDAQSI). 3 positions are modified to phosphoserine: serine 54, serine 58, and serine 61. In terms of domain architecture, ABC transporter 1 spans 161–410 (LRKFQRSKET…FEDMGYVCPS (250 aa)). A helical transmembrane segment spans residues 518–542 (NNIGFTLFMILGNCSMALILGSMFF). The Extracellular segment spans residues 543–558 (KIMKKGDTSTFYFRGS). The helical transmembrane segment at 559-579 (AMFFAILFNAFSSLLEIFSLY) threads the bilayer. The Cytoplasmic segment spans residues 580–611 (EARPITEKHRTYSLYHPSADAFASVLSEIPSK). A helical membrane pass occupies residues 612 to 628 (LIIAVCFNIIFYFLVDF). Over 629–631 (RRN) the chain is Extracellular. The chain crosses the membrane as a helical span at residues 632-650 (GGVFFFYLLINIVAVFSMS). Over 651–665 (HLFRCVGSLTKTLSE) the chain is Cytoplasmic. The helical transmembrane segment at 666-685 (AMVPASMLLLALSMYTGFAI) threads the bilayer. The Extracellular portion of the chain corresponds to 686–774 (PKKKILRWSK…QYYHKDKWRG (89 aa)). N-linked (GlcNAc...) asparagine glycosylation is present at asparagine 734. The helical transmembrane segment at 775 to 793 (FGIGMAYVVFFFFVYLFLC) threads the bilayer. Over 794-1237 (EYNEGAKQKG…GTSLQGLQNQ (444 aa)) the chain is Cytoplasmic. The disordered stretch occupies residues 824–858 (EKNANDPENVGERSDLSSDRKMLQESSEEESDTYG). Lysine 825 participates in a covalent cross-link: Glycyl lysine isopeptide (Lys-Gly) (interchain with G-Cter in ubiquitin). Residues 833-846 (VGERSDLSSDRKML) are compositionally biased toward basic and acidic residues. Phosphoserine occurs at positions 837, 840, 841, 849, 850, and 854. The 244-residue stretch at 869–1112 (FHWRNLCYEV…MIDYFESHGA (244 aa)) folds into the ABC transporter 2 domain. ATP is bound at residue 905–912 (GASGAGKT). A helical membrane pass occupies residues 1238–1260 (MLAVFMFTVIFNPILQQYLPSFV). Residues 1261 to 1291 (QQRDLYEARERPSRTFSWISFIFAQIFVEVP) lie on the Extracellular side of the membrane. Residues 1292–1313 (WNILAGTIAYFIYYYPIGFYSN) traverse the membrane as a helical segment. Over 1314–1324 (ASAAGQLHERG) the chain is Cytoplasmic. Residues 1325 to 1349 (ALFWLFSCAFYVYVGSMGLLVISFN) form a helical membrane-spanning segment. Topologically, residues 1350 to 1354 (QVAES) are extracellular. A helical membrane pass occupies residues 1355 to 1379 (AANLASLLFTMSLSFCGVMTTPSAM). The Cytoplasmic segment spans residues 1380-1388 (PRFWIFMYR). The helical transmembrane segment at 1389-1407 (VSPLTYFIQALLAVGVANV) threads the bilayer. The Extracellular portion of the chain corresponds to 1408-1476 (DVKCADYELL…VNSFYSERWR (69 aa)). An N-linked (GlcNAc...) asparagine glycan is attached at asparagine 1447. A helical transmembrane segment spans residues 1477-1499 (NYGIFICYIAFNYIAGVFFYWLA). Topologically, residues 1500 to 1511 (RVPKKNGKLSKK) are cytoplasmic.

Belongs to the ABC transporter superfamily. ABCG family. PDR (TC 3.A.1.205) subfamily. In terms of processing, ubiquitinylation mediates endocytosis and vacuolar degradation. Phosphorylation by casein kinase I stabilizes the protein half-life.

Its subcellular location is the cell membrane. FK506, isonitrile, enniatin, RU49953, kitasatospora E420, staurosporine CGP42700, prenyl-flavonoids, D-octapeptides were found to be inhibitors in vivo. Vanadate and oligomycin were found to be inhibitors in vitro. Functionally, active efflux of weakly charged organic compounds of 90 cubic Angstroms to 300 cubic Angstroms surface volume. Confers resistance to numerous chemicals including cycloheximide, sulfomethuron methyl, steroids, antiseptics, antibiotics, anticancer, herbicides, mycotoxins, insecticides, ionophores, alkaloids, flavonoids, phenothiazines, organotin compounds, carbazoles, lysosomotropic aminoesters, detergents, rhodamines and other fluorophores, azoles and other antifungals. Exhibits nucleoside triphosphatase activity. This Saccharomyces cerevisiae (strain ATCC 204508 / S288c) (Baker's yeast) protein is Pleiotropic ABC efflux transporter of multiple drugs (PDR5).